The sequence spans 189 residues: Large ribosomal subunit protein bL9 (189 aa).

The protein belongs to the bacterial ribosomal protein bL9 family.

Binds to the 23S rRNA. This is Large ribosomal subunit protein bL9 from Methylobacterium nodulans (strain LMG 21967 / CNCM I-2342 / ORS 2060).